A 281-amino-acid chain; its full sequence is Sulfur carrier protein FdhD (281 aa).

Cysteine 117 (cysteine persulfide intermediate) is an active-site residue.

Belongs to the FdhD family.

It is found in the cytoplasm. Required for formate dehydrogenase (FDH) activity. Acts as a sulfur carrier protein that transfers sulfur from IscS to the molybdenum cofactor prior to its insertion into FDH. The chain is Sulfur carrier protein FdhD from Xanthomonas axonopodis pv. citri (strain 306).